A 142-amino-acid chain; its full sequence is uncharacterized protein (142 aa).

Residues 1–31 (MSLPKKKKPEVEEEEKPEEEEEKEEEQEIDI) are disordered. Residues 11-29 (VEEEEKPEEEEEKEEEQEI) are compositionally biased toward acidic residues.

This is an uncharacterized protein from Acidianus sp. F28 (AFV-2).